The primary structure comprises 225 residues: Chalcone--flavanone isomerase 3 (225 aa).

Positions 51, 116, and 193 each coordinate substrate.

It belongs to the chalcone isomerase family.

It carries out the reaction a chalcone = a flavanone.. It participates in secondary metabolite biosynthesis; flavonoid biosynthesis. Catalyzes the intramolecular cyclization of bicyclic chalcones into tricyclic (S)-flavanones. Responsible for the isomerization of 4,2',4',6'-tetrahydroxychalcone (also termed chalcone) into naringenin. In Lotus japonicus (Lotus corniculatus var. japonicus), this protein is Chalcone--flavanone isomerase 3 (CHI3).